Reading from the N-terminus, the 490-residue chain is MRTDAAGGTYLDPSAADVTALLERVHLVGIGGAGMSGIARILLARGRQVSGSDARDSRTVLALKAQGAHIALGHRAENIEQFDGDPTAVVVSTAIRRDNPELVAAQERGVPVLRRAEALAALMADHRVACVAGTHGKTSTTSMLTVALQHCRLDPSFAIGGDLNESGANAHHGDGGVFVAEADESDGSFLVFAPSVAVVTNVEPDHLDHHGTAEAYTEVFQRFVERIEPGGVLIACADDAGAALLADQAEAAGVRVRRYGHEVTADGDARMVGYRPEHGSGVVTVEVSGDRLDVQVAVPGEHMAANAVAALLAGLELGAPLEGLLEGLAAFGGVRRRFEFKGRADGVRVYDDYAHHPTEVDAQLRAARPVVGDGRLVVVFQPHLYSRTAAFSGEFATALGLADEVVVLDVYGAREDPQPGVTGELIAESVPLPAERVHYEASFTAAAPLVAGLVQPGDLVLTMGAGDVTMLGPEILAEVERESGATEEDA.

Residue 133–139 (GTHGKTS) participates in ATP binding.

This sequence belongs to the MurCDEF family.

Its subcellular location is the cytoplasm. It carries out the reaction UDP-N-acetyl-alpha-D-muramate + L-alanine + ATP = UDP-N-acetyl-alpha-D-muramoyl-L-alanine + ADP + phosphate + H(+). The protein operates within cell wall biogenesis; peptidoglycan biosynthesis. Cell wall formation. The chain is UDP-N-acetylmuramate--L-alanine ligase from Saccharopolyspora erythraea (strain ATCC 11635 / DSM 40517 / JCM 4748 / NBRC 13426 / NCIMB 8594 / NRRL 2338).